A 1332-amino-acid polypeptide reads, in one-letter code: MRNLKLFRTLEFRDIQGPGNPQCFSLRTEQGTVLIGSEHGLIEVDPVSREVKNEVSLVAEGFLPEDGSGRIVGVQDLLDQESVCVATASGDVILCSLSTQQLECVGSVASGISVMSWSPDQELVLLATGQQTLIMMTKDFEPILEQQIHQDDFGESKFITVGWGRKETQFHGSEGRQAAFQMQMHESALPWDDHRPQVTWRGDGQFFAVSVVCPETGARKVRVWNREFALQSTSEPVAGLGPALAWKPSGSLIASTQDKPNQQDIVFFEKNGLLHGHFTLPFLKDEVKVNDLLWNADSSVLAVWLEDLQREESSIPKTCVQLWTVGNYHWYLKQSLSFSTCGKSKIVSLMWDPVTPYRLHVLCQGWHYLAYDWHWTTDRSVGDNSSDLSNVAVIDGNRVLVTVFRQTVVPPPMCTYQLLFPHPVNQVTFLAHPQKSNDLAVLDASNQISVYKCGDCPSADPTVKLGAVGGSGFKVCLRTPHLEKRYKIQFENNEDQDVNPLKLGLLTWIEEDVFLAVSHSEFSPRSVIHHLTAASSEMDEEHGQLNVSSSAAVDGVIISLCCNSKTKSVVLQLADGQIFKYLWESPSLAIKPWKNSGGFPVRFPYPCTQTELAMIGEEECVLGLTDRCRFFINDIEVASNITSFAVYDEFLLLTTHSHTCQCFCLRDASFKTLQAGLSSNHVSHGEVLRKVERGSRIVTVVPQDTKLVLQMPRGNLEVVHHRALVLAQIRKWLDKLMFKEAFECMRKLRINLNLIYDHNPKVFLGNVETFIKQIDSVNHINLFFTELKEEDVTKTMYPAPVTSSVYLSRDPDGNKIDLVCDAMRAVMESINPHKYCLSILTSHVKKTTPELEIVLQKVHELQGNAPSDPDAVSAEEALKYLLHLVDVNELYDHSLGTYDFDLVLMVAEKSQKDPKEYLPFLNTLKKMETNYQRFTIDKYLKRYEKAIGHLSKCGPEYFPECLNLIKDKNLYNEALKLYSPSSQQYQDISIAYGEHLMQEHMYEPAGLMFARCGAHEKALSAFLTCGNWKQALCVAAQLNFTKDQLVGLGRTLAGKLVEQRKHIDAAMVLEECAQDYEEAVLLLLEGAAWEEALRLVYKYNRLDIIETNVKPSILEAQKNYMAFLDSQTATFSRHKKRLLVVRELKEQAQQAGLDDEVPHGQESDLFSETSSVVSGSEMSGKYSHSNSRISARSSKNRRKAERKKHSLKEGSPLEDLALLEALSEVVQNTENLKDEVYHILKVLFLFEFDEQGRELQKAFEDTLQLMERSLPEIWTLTYQQNSATPVLGPNSTANSIMASYQQQKTSVPVLDAELFIPPKINRRTQWKLSLLD.

Ser471, Ser804, Ser867, Ser1171, and Ser1174 each carry phosphoserine. Positions 885 to 1332 (VDVNELYDHS…RTQWKLSLLD (448 aa)) are mediates dimerization. Positions 1150 to 1208 (QAGLDDEVPHGQESDLFSETSSVVSGSEMSGKYSHSNSRISARSSKNRRKAERKKHSLK) are disordered. Residues 1164 to 1177 (DLFSETSSVVSGSE) show a composition bias toward polar residues. The segment at 1191-1209 (ARSSKNRRKAERKKHSLKE) is required for binding to tRNA. Basic residues predominate over residues 1194 to 1206 (SKNRRKAERKKHS).

The protein belongs to the ELP1/IKA1 family. As to quaternary structure, homodimer; dimerization promotes ELP1 stability and elongator complex formation. Component of the elongator complex which consists of ELP1, ELP2, ELP3, ELP4, ELP5 and ELP6. Interacts preferentially with MAP3K14/NIK followed by IKK-alpha and IKK-beta.

It localises to the cytoplasm. Its subcellular location is the nucleus. Its pathway is tRNA modification; 5-methoxycarbonylmethyl-2-thiouridine-tRNA biosynthesis. Its function is as follows. Component of the elongator complex which is required for multiple tRNA modifications, including mcm5U (5-methoxycarbonylmethyl uridine), mcm5s2U (5-methoxycarbonylmethyl-2-thiouridine), and ncm5U (5-carbamoylmethyl uridine). The elongator complex catalyzes the formation of carboxymethyluridine in the wobble base at position 34 in tRNAs. Regulates the migration and branching of projection neurons in the developing cerebral cortex, through a process depending on alpha-tubulin acetylation. ELP1 binds to tRNA, mediating interaction of the elongator complex with tRNA. May act as a scaffold protein that assembles active IKK-MAP3K14 complexes (IKKA, IKKB and MAP3K14/NIK). This chain is Elongator complex protein 1, found in Homo sapiens (Human).